The following is a 111-amino-acid chain: Cell cycle protein GpsB (111 aa).

Residues 34-72 (LDMIIKDYEVFHKELEQLQQQNARLKRELEEQKLAAAQA) are a coiled coil.

Belongs to the GpsB family. Forms polymers through the coiled coil domains. Interacts with PBP1, MreC and EzrA.

The protein resides in the cytoplasm. Functionally, divisome component that associates with the complex late in its assembly, after the Z-ring is formed, and is dependent on DivIC and PBP2B for its recruitment to the divisome. Together with EzrA, is a key component of the system that regulates PBP1 localization during cell cycle progression. Its main role could be the removal of PBP1 from the cell pole after pole maturation is completed. Also contributes to the recruitment of PBP1 to the division complex. Not essential for septum formation. The protein is Cell cycle protein GpsB of Bacillus cytotoxicus (strain DSM 22905 / CIP 110041 / 391-98 / NVH 391-98).